The primary structure comprises 46 residues: Large ribosomal subunit protein bL34 (46 aa).

Residues 25-46 (TASGRQVLRRRRAKGRYRLAVS) are disordered. The span at 31 to 46 (VLRRRRAKGRYRLAVS) shows a compositional bias: basic residues.

It belongs to the bacterial ribosomal protein bL34 family.

This is Large ribosomal subunit protein bL34 from Synechococcus sp. (strain JA-3-3Ab) (Cyanobacteria bacterium Yellowstone A-Prime).